Consider the following 260-residue polypeptide: Small ribosomal subunit protein uS2 (260 aa).

It belongs to the universal ribosomal protein uS2 family.

The sequence is that of Small ribosomal subunit protein uS2 from Mesorhizobium japonicum (strain LMG 29417 / CECT 9101 / MAFF 303099) (Mesorhizobium loti (strain MAFF 303099)).